The chain runs to 238 residues: MPSDRRPSQRRNRSKSRDYRGARSKVTRADTRNRDDTLALSMYQGPPSADQGNNMADAPRFGFWTSVSQCLQYLWARRHLGLLLLLFWTLVILFRPVNTAKLPILAEAAELEPPLGNMLDFFFPTACIIRDNQVVVACNNQPYLSESECLKSKCCSSTSGTIIKCYAPVRDKPTQVLRVFGLAAISILVLGFLPMCCCSMCWRRKRMNRMLKVLKKQKSKGKKPKGRKASEERALLSH.

Residues 1–30 (MPSDRRPSQRRNRSKSRDYRGARSKVTRAD) are disordered. Over 1–79 (MPSDRRPSQR…CLQYLWARRH (79 aa)) the chain is Cytoplasmic. A compositionally biased stretch (basic and acidic residues) spans 15-30 (KSRDYRGARSKVTRAD). Residues 80–100 (LGLLLLLFWTLVILFRPVNTA) form a helical membrane-spanning segment. Over 101 to 178 (KLPILAEAAE…VRDKPTQVLR (78 aa)) the chain is Extracellular. The 59-residue stretch at 118 to 176 (MLDFFFPTACIIRDNQVVVACNNQPYLSESECLKSKCCSSTSGTIIKCYAPVRDKPTQV) folds into the P-type domain. Residues 179–199 (VFGLAAISILVLGFLPMCCCS) form a helical membrane-spanning segment. Residues 200-238 (MCWRRKRMNRMLKVLKKQKSKGKKPKGRKASEERALLSH) lie on the Cytoplasmic side of the membrane. Positions 214 to 227 (LKKQKSKGKKPKGR) are enriched in basic residues. The tract at residues 214 to 238 (LKKQKSKGKKPKGRKASEERALLSH) is disordered. Over residues 228 to 238 (KASEERALLSH) the composition is skewed to basic and acidic residues.

It localises to the membrane. In Mus musculus (Mouse), this protein is Fmr1 neighbor protein.